Here is a 209-residue protein sequence, read N- to C-terminus: Protein TIC 20-v, chloroplastic (209 aa).

The N-terminal 49 residues, 1-49 (MAIISQFFAPLPSLTGTLTLTGRSFLPLNLDTQFPKPRLSRDRAATLVL), are a transit peptide targeting the chloroplast. 4 helical membrane passes run 63-83 (IISA…GKFI), 103-123 (AFKS…FVVV), 132-152 (VRFN…PDLL), and 173-193 (TVFL…LFGL).

The protein belongs to the Tic20 family. As to quaternary structure, part of the Tic complex. As to expression, expressed in leaves, siliques and roots.

It is found in the plastid. It localises to the chloroplast inner membrane. In terms of biological role, may be involved in protein precursor import into chloroplasts. Not redundant with TIC20-I, TIC20-II or TIC20-IV. In Arabidopsis thaliana (Mouse-ear cress), this protein is Protein TIC 20-v, chloroplastic (TIC20-V).